The sequence spans 255 residues: 4-diphosphocytidyl-2-C-methyl-D-erythritol kinase (255 aa).

Lys9 is a catalytic residue. 95-105 (PSQAGLGGGSS) serves as a coordination point for ATP. The active site involves Asp137.

Belongs to the GHMP kinase family. IspE subfamily.

The catalysed reaction is 4-CDP-2-C-methyl-D-erythritol + ATP = 4-CDP-2-C-methyl-D-erythritol 2-phosphate + ADP + H(+). It functions in the pathway isoprenoid biosynthesis; isopentenyl diphosphate biosynthesis via DXP pathway; isopentenyl diphosphate from 1-deoxy-D-xylulose 5-phosphate: step 3/6. In terms of biological role, catalyzes the phosphorylation of the position 2 hydroxy group of 4-diphosphocytidyl-2C-methyl-D-erythritol. This chain is 4-diphosphocytidyl-2-C-methyl-D-erythritol kinase, found in Sulfurovum sp. (strain NBC37-1).